Reading from the N-terminus, the 423-residue chain is Gamma-glutamyl phosphate reductase (423 aa).

This sequence belongs to the gamma-glutamyl phosphate reductase family.

It is found in the cytoplasm. The enzyme catalyses L-glutamate 5-semialdehyde + phosphate + NADP(+) = L-glutamyl 5-phosphate + NADPH + H(+). The protein operates within amino-acid biosynthesis; L-proline biosynthesis; L-glutamate 5-semialdehyde from L-glutamate: step 2/2. Functionally, catalyzes the NADPH-dependent reduction of L-glutamate 5-phosphate into L-glutamate 5-semialdehyde and phosphate. The product spontaneously undergoes cyclization to form 1-pyrroline-5-carboxylate. The protein is Gamma-glutamyl phosphate reductase of Burkholderia pseudomallei (strain 1710b).